The following is a 233-amino-acid chain: Large ribosomal subunit protein uL3 (233 aa).

It belongs to the universal ribosomal protein uL3 family. As to quaternary structure, part of the 50S ribosomal subunit. Forms a cluster with proteins L14 and L19.

Functionally, one of the primary rRNA binding proteins, it binds directly near the 3'-end of the 23S rRNA, where it nucleates assembly of the 50S subunit. This Ureaplasma parvum serovar 3 (strain ATCC 27815 / 27 / NCTC 11736) protein is Large ribosomal subunit protein uL3.